The chain runs to 167 residues: Small ribosomal subunit protein uS5 (167 aa).

In terms of domain architecture, S5 DRBM spans 12 to 75; that stretch reads LEDNVVAINR…EAARKNLIEV (64 aa).

The protein belongs to the universal ribosomal protein uS5 family. As to quaternary structure, part of the 30S ribosomal subunit. Contacts proteins S4 and S8.

In terms of biological role, with S4 and S12 plays an important role in translational accuracy. Functionally, located at the back of the 30S subunit body where it stabilizes the conformation of the head with respect to the body. This chain is Small ribosomal subunit protein uS5, found in Levilactobacillus brevis (strain ATCC 367 / BCRC 12310 / CIP 105137 / JCM 1170 / LMG 11437 / NCIMB 947 / NCTC 947) (Lactobacillus brevis).